A 373-amino-acid polypeptide reads, in one-letter code: Anhydro-N-acetylmuramic acid kinase (373 aa).

Residue glycine 12–aspartate 19 participates in ATP binding.

This sequence belongs to the anhydro-N-acetylmuramic acid kinase family.

It carries out the reaction 1,6-anhydro-N-acetyl-beta-muramate + ATP + H2O = N-acetyl-D-muramate 6-phosphate + ADP + H(+). Its pathway is amino-sugar metabolism; 1,6-anhydro-N-acetylmuramate degradation. It functions in the pathway cell wall biogenesis; peptidoglycan recycling. Catalyzes the specific phosphorylation of 1,6-anhydro-N-acetylmuramic acid (anhMurNAc) with the simultaneous cleavage of the 1,6-anhydro ring, generating MurNAc-6-P. Is required for the utilization of anhMurNAc either imported from the medium or derived from its own cell wall murein, and thus plays a role in cell wall recycling. The protein is Anhydro-N-acetylmuramic acid kinase of Serratia proteamaculans (strain 568).